The sequence spans 152 residues: Nucleoside diphosphate kinase B (152 aa).

The tract at residues 1 to 66 (MANLERTFIA…DRPFFPGLVK (66 aa)) is interaction with AKAP13. Residues Lys-12, Phe-60, Arg-88, Thr-94, Arg-105, and Asn-115 each coordinate ATP. Residue His-118 is the Pros-phosphohistidine intermediate of the active site.

It belongs to the NDK family. Hexamer of two different chains: An and B (A6, A5B, A4B2, A3B3, A2B4, AB5, B6). Interacts with CAPN8. Interacts with AKAP13. Interacts with ITGB1BP1 (via C-terminal domain region). Interacts with BCL2L10. Requires Mg(2+) as cofactor. The N-terminus is blocked.

It localises to the cytoplasm. It is found in the cell projection. The protein localises to the lamellipodium. Its subcellular location is the ruffle. The protein resides in the nucleus. The enzyme catalyses a 2'-deoxyribonucleoside 5'-diphosphate + ATP = a 2'-deoxyribonucleoside 5'-triphosphate + ADP. The catalysed reaction is a ribonucleoside 5'-diphosphate + ATP = a ribonucleoside 5'-triphosphate + ADP. It catalyses the reaction ATP + protein L-histidine = ADP + protein N-phospho-L-histidine.. Major role in the synthesis of nucleoside triphosphates other than ATP. The ATP gamma phosphate is transferred to the NDP beta phosphate via a ping-pong mechanism, using a phosphorylated active-site intermediate. Negatively regulates Rho activity by interacting with AKAP13/LBC. Acts as a transcriptional activator of the MYC gene; binds DNA non-specifically. Binds to both single-stranded guanine- and cytosine-rich strands within the nuclease hypersensitive element (NHE) III(1) region of the MYC gene promoter. Does not bind to duplex NHE III(1). Has G-quadruplex (G4) DNA-binding activity, which is independent of its nucleotide-binding and kinase activity. Binds both folded and unfolded G4 with similar low nanomolar affinities. Stabilizes folded G4s regardless of whether they are prefolded or not. Exhibits histidine protein kinase activity. The chain is Nucleoside diphosphate kinase B (Nme2) from Rattus norvegicus (Rat).